The primary structure comprises 128 residues: Large ribosomal subunit protein bL17 (128 aa).

This sequence belongs to the bacterial ribosomal protein bL17 family. As to quaternary structure, part of the 50S ribosomal subunit. Contacts protein L32.

The protein is Large ribosomal subunit protein bL17 of Streptococcus mutans serotype c (strain ATCC 700610 / UA159).